The primary structure comprises 102 residues: Antitoxin VapB46 (102 aa).

Belongs to the phD/YefM antitoxin family.

Antitoxin component of a type II toxin-antitoxin (TA) system. Neutralizes the effect of cognate toxin VapC46. This chain is Antitoxin VapB46 (vapB46), found in Mycobacterium tuberculosis (strain CDC 1551 / Oshkosh).